Consider the following 446-residue polypeptide: Coagulation factor VII (446 aa).

Residues 1–24 (MVPQAHGLLLLCFLLQLQGPLGTA) form the signal peptide. Residues 25-41 (VFITQEEAHGVLHRQRR) constitute a propeptide that is removed on maturation. The 45-residue stretch at 42 to 86 (ANSLLEELWPGSLERECNEEQCSFEEAREIFKSPERTKQFWIVYS) folds into the Gla domain. 4-carboxyglutamate is present on residues Glu-47, Glu-48, Glu-55, Glu-57, Glu-60, Glu-61, Glu-66, Glu-67, Glu-70, and Glu-76. Cys-58 and Cys-63 are oxidised to a cystine. In terms of domain architecture, EGF-like 1; calcium-binding spans 87–123 (DGDQCASNPCQNGGTCQDHLKSYVCFCLLDFEGRNCE). Cystine bridges form between Cys-91-Cys-102, Cys-96-Cys-111, Cys-113-Cys-122, Cys-132-Cys-143, Cys-139-Cys-153, Cys-155-Cys-168, Cys-176-Cys-303, Cys-200-Cys-205, Cys-219-Cys-235, and Cys-351-Cys-370. An O-linked (Glc...) serine; alternate glycan is attached at Ser-93. Ser-93 is a glycosylation site (O-linked (Xyl...) serine; alternate). Asp-104 is modified ((3R)-3-hydroxyaspartate). The EGF-like 2 domain maps to 128 to 169 (EQLICANENGDCDQYCRDHVGTKRTCSCHEDYTLQPDEVSCK). N-linked (GlcNAc...) asparagine glycosylation is present at Asn-186. Residues 194–433 (IVGGNVCPKG…YIDWLVRHMD (240 aa)) form the Peptidase S1 domain. The active-site Charge relay system is His-234. An N-linked (GlcNAc...) asparagine glycan is attached at Asn-244. The active-site Charge relay system is the Asp-283. Asp-379 lines the substrate pocket. The cysteines at positions 381 and 409 are disulfide-linked. The active-site Charge relay system is Ser-385.

Belongs to the peptidase S1 family. In terms of assembly, heterodimer of a light chain and a heavy chain linked by a disulfide bond. The vitamin K-dependent, enzymatic carboxylation of some glutamate residues allows the modified protein to bind calcium. In terms of processing, the iron and 2-oxoglutarate dependent 3-hydroxylation of aspartate and asparagine is (R) stereospecific within EGF domains. Post-translationally, can be either O-glucosylated or O-xylosylated at Ser-93 by POGLUT1. In terms of tissue distribution, plasma and liver.

Its subcellular location is the secreted. The catalysed reaction is Selective cleavage of Arg-|-Ile bond in factor X to form factor Xa.. Its function is as follows. Initiates the extrinsic pathway of blood coagulation. Serine protease that circulates in the blood in a zymogen form. Factor VII is converted to factor VIIa by factor Xa, factor XIIa, factor IXa, or thrombin by minor proteolysis. In the presence of tissue factor and calcium ions, factor VIIa then converts factor X to factor Xa by limited proteolysis. Factor VIIa also converts factor IX to factor IXa in the presence of tissue factor and calcium. This chain is Coagulation factor VII (F7), found in Mus musculus (Mouse).